A 252-amino-acid polypeptide reads, in one-letter code: Flavin-dependent thymidylate synthase (252 aa).

The 229-residue stretch at 7-235 (LDVQLVACST…PTVFSDFETS (229 aa)) folds into the ThyX domain. Residues 94–97 (ELVR), 105–109 (QLSQR), and R174 contribute to the dUMP site. FAD is bound by residues 97–99 (RHR) and Q105. The ThyX motif motif lies at 97–107 (RHRHFSFSQLS). FAD-binding positions include 190-192 (NFR) and H196. Position 201 (R201) interacts with dUMP. R201 serves as the catalytic Involved in ionization of N3 of dUMP, leading to its activation.

The protein belongs to the thymidylate synthase ThyX family. Homotetramer. FAD is required as a cofactor.

The enzyme catalyses dUMP + (6R)-5,10-methylene-5,6,7,8-tetrahydrofolate + NADPH + H(+) = dTMP + (6S)-5,6,7,8-tetrahydrofolate + NADP(+). Its pathway is pyrimidine metabolism; dTTP biosynthesis. Its function is as follows. Catalyzes the reductive methylation of 2'-deoxyuridine-5'-monophosphate (dUMP) to 2'-deoxythymidine-5'-monophosphate (dTMP) while utilizing 5,10-methylenetetrahydrofolate (mTHF) as the methyl donor, and NADPH and FADH(2) as the reductant. The protein is Flavin-dependent thymidylate synthase of Corynebacterium diphtheriae (strain ATCC 700971 / NCTC 13129 / Biotype gravis).